The following is a 672-amino-acid chain: Transcriptional activator of sulfur metabolism MET4 (672 aa).

Residues 1–10 (MKQEQSHEGD) show a composition bias toward basic and acidic residues. A disordered region spans residues 1–44 (MKQEQSHEGDSYSTEFINLFGKDTATHPSSNNGANNNGMGSTNS). Low complexity predominate over residues 29–44 (SSNNGANNNGMGSTNS). 3 short sequence motifs (9aaTAD) span residues 89 to 97 (ILLEQLAYV), 102 to 110 (PSLDNEFSN), and 109 to 117 (SNVDWNVNT). The segment at 95–144 (AYVDNFIPSLDNEFSNVDWNVNTTHNNANNNGADTFSSINANPFDLDEQL) is transcriptional activation. 2 disordered regions span residues 157–265 (IFPD…NMTS) and 299–347 (TTHT…NITV). Residues 165-174 (SNNNNNSNNG) are compositionally biased toward low complexity. Positions 175–188 (NDDHSNHDVLHEDP) are enriched in basic and acidic residues. The tract at residues 188 to 235 (PSTNNRQRNPHFLTQRRNTFLTSQYDQSKSRFSSKNKRNGNNGETNNF) is inhibitory region; AdoMet responsiveness; required for interaction with MET30. Residues 202-214 (QRRNTFLTSQYDQ) are compositionally biased toward polar residues. Residues 226–238 (NGNNGETNNFGDN) show a composition bias toward low complexity. 2 stretches are compositionally biased toward polar residues: residues 251 to 265 (GSPS…NMTS) and 301 to 321 (HTPN…SSSQ). The segment at 312-375 (VTSAQNSSSQ…NVPNGAYNSL (64 aa)) is auxiliary; required for high transcriptional activity under nonrepressive growth conditions. The required for interaction with MET31 and MET32 stretch occupies residues 375–403 (LISAGFDNDQIDAIAAIMAYHHQKKIREN). The residue at position 416 (serine 416) is a Phosphoserine. The disordered stretch occupies residues 475-574 (PKSNNIHNQR…DNEDDEYDDA (100 aa)). Over residues 477 to 486 (SNNIHNQRQP) the composition is skewed to polar residues. Residues 487 to 498 (SRNDHKISRESD) show a composition bias toward basic and acidic residues. Over residues 499 to 512 (GNNGNDNVHHNNAV) the composition is skewed to low complexity. 2 stretches are compositionally biased toward basic and acidic residues: residues 519-528 (RGDEIAKIRS) and 537-565 (SDHK…KYSD). A Phosphoserine modification is found at serine 564. Residues 586–649 (KKELGDDDED…KLLKNLVLSS (64 aa)) enclose the bZIP domain. The interval 601–612 (KKSHQKKKLKEK) is basic motif. Positions 609–648 (LKEKELESSIHELTEIAASLQKRIHTLETENKLLKNLVLS) form a coiled coil. The tract at residues 614–642 (LESSIHELTEIAASLQKRIHTLETENKLL) is leucine-zipper.

The protein belongs to the bZIP family. Interacts with MET30. Tethered to DNA through two alternate complexes associating MET4 with MET28 and either MET31 or MET32. Interacts with MET28 and CBF1 through its leucine zipper to form a heteromeric complex.

The protein resides in the nucleus. Its function is as follows. Positive trans-acting factor capable of stimulating the transcription of the MET genes from the methionine biosynthetic pathway. MET4, MET28 and CBF1 are required for full induction of MET25 and MET16 gene transcription. MET4 controls as well the derepression of MET6. Required for the transcription of genes necessary for sulfur amino acid biosynthesis. Involved in the transcription activation of MET28 and MET30. Required for MET3 gene expression via assembly of the MET4-MET28-MET31 and MET4-MET28-MET32 complexes. Involved in response to cadmium and arsenic. Cadmium-activated MET4 also induces glutathione biosynthesis. The chain is Transcriptional activator of sulfur metabolism MET4 (MET4) from Saccharomyces cerevisiae (strain ATCC 204508 / S288c) (Baker's yeast).